We begin with the raw amino-acid sequence, 314 residues long: Mitochondrial MRF1 N(5)-glutamine methyltransferase MTQ1 (314 aa).

S-adenosyl-L-methionine-binding positions include F118–G122, D141, and N188. N188–Y191 provides a ligand contact to substrate.

Belongs to the protein N5-glutamine methyltransferase family.

The protein localises to the mitochondrion. The enzyme catalyses L-glutaminyl-[peptide chain release factor] + S-adenosyl-L-methionine = N(5)-methyl-L-glutaminyl-[peptide chain release factor] + S-adenosyl-L-homocysteine + H(+). Methylates MRF1 on 'Gln-287' using S-adenosyl L-methionine as methyl donor. This chain is Mitochondrial MRF1 N(5)-glutamine methyltransferase MTQ1 (MTQ1), found in Saccharomyces cerevisiae (strain ATCC 204508 / S288c) (Baker's yeast).